The primary structure comprises 432 residues: MRVLILGSGVVGTVSAYYLAREGFEVVVVDRQDGPAMETSFANAGQVSPGYASPWSAPGVPLKAIRWMLQQHAPLAIKPTSSLDQYRWMIQMLRNCNPASYAVNKERMVRISEYSRDCLDELRAETGISYEARQLGTTQLFRTQAQVDNAAKDIAILKQSGVPFELLDRDGIAKAEPALASVRDKLAGALRLPNDQTGDCQMFTRKLAKMAEELGVEFRFGCNIDRLECSGDTISGVWIDGKLEVADQYVLALGSYSPHMLKPLGIQAPIYPLKGYSLTIPITDASMAPSSTILDETYKVAITRFDDRIRVGGMAEIAGFDLSLNARRRDTLELVVGDLYPKGGDLTKATFWTGLRPATPDGTPIVGKTKYRNLFLNTGHGTLGWTMSCGSGRLLADLMAGKKPKISAKGLDISRYSNQKEAHNHGNPATAL.

An FAD-binding site is contributed by 3–17 (VLILGSGVVGTVSAY).

The protein belongs to the DadA oxidoreductase family. It depends on FAD as a cofactor.

It catalyses the reaction a D-alpha-amino acid + A + H2O = a 2-oxocarboxylate + AH2 + NH4(+). In terms of biological role, oxidative deamination of D-amino acids. This chain is D-amino acid dehydrogenase 1 (dadA1), found in Pseudomonas putida (strain ATCC 47054 / DSM 6125 / CFBP 8728 / NCIMB 11950 / KT2440).